The primary structure comprises 365 residues: MWPLSHRHLCLAFLLVCVLSAISFFLHLYQDSIRHGLGLSILCPDRLVTAPVAIFCLPDTPVSPNTSSPCPQHPASLSGTWTIYPDGRFGNQMGQYATLLALAQLNGRRAFILPAMHATLAPVFRITLPVLAPEVDSSTPWRELQLHDWMSEEYADLGDPFLKLSGFPCSWTFFHHLREQILSEFTLHDHLREEAQSVLRRLRLGRSGDRPRTFVGVHVRRGDYLQVMPQRWKGVVGNSAYLREAMDWFRARHEAPVFVVTSNGMEWCRENIDASKGDVMFAGDGREALPWKDFALLTQCNHTIMTIGTFGFWAAYLAGGDTVYLANFTLPDSEFLKIFKPEAAFLPEWVGINADLSPLWTLAEP.

The Cytoplasmic portion of the chain corresponds to 1–8 (MWPLSHRH). The chain crosses the membrane as a helical; Signal-anchor for type II membrane protein span at residues 9–25 (LCLAFLLVCVLSAISFF). Residues 26–365 (LHLYQDSIRH…LSPLWTLAEP (340 aa)) lie on the Lumenal side of the membrane. Residues N65, N301, and N327 are each glycosylated (N-linked (GlcNAc...) asparagine).

Belongs to the glycosyltransferase 11 family.

It localises to the golgi apparatus. Its subcellular location is the golgi stack membrane. It catalyses the reaction a beta-D-galactosyl-(1-&gt;4)-N-acetyl-beta-D-glucosaminyl derivative + GDP-beta-L-fucose = an alpha-L-Fuc-(1-&gt;2)-beta-D-Gal-(1-&gt;4)-beta-D-GlcNAc derivative + GDP + H(+). The catalysed reaction is a ganglioside GA1 + GDP-beta-L-fucose = a ganglioside Fuc-GA1 + GDP + H(+). The enzyme catalyses a beta-D-Gal-(1-&gt;3)-beta-D-GlcNAc-(1-&gt;3)-beta-D-Gal-(1-&gt;4)-beta-D-Glc-(1&lt;-&gt;1')-Cer(d18:1(4E)) + GDP-beta-L-fucose = alpha-L-fucosyl-(1-&gt;2)- beta-D-galactosyl-(1-&gt;3)-N-acetyl-beta-D-glucosaminyl-(1-&gt;3)-beta-D-galactosyl-(1-&gt;4)-beta-D-glucosyl-(1&lt;-&gt;1')-N-acylsphing-4-enine + GDP + H(+). It carries out the reaction a neolactoside nLc4Cer(d18:1(4E)) + GDP-beta-L-fucose = a neolactoside IV(2)-alpha-Fuc-nLc4Cer(d18:1(4E)) + GDP + H(+). It catalyses the reaction a ganglioside GM1 + GDP-beta-L-fucose = a ganglioside Fuc-GM1 + GDP + H(+). The catalysed reaction is beta-D-galactosyl-(1-&gt;3)-N-acetyl-D-galactosamine + GDP-beta-L-fucose = alpha-L-fucosyl-(1-&gt;2)-beta-D-galactosyl-(1-&gt;3)-N-acetyl-D-galactosamine + GDP + H(+). It functions in the pathway protein modification; protein glycosylation. Functionally, catalyzes the transfer of L-fucose, from a guanosine diphosphate-beta-L-fucose, to the terminal galactose residue of glycoconjugates through an alpha(1,2) linkage leading to H antigen synthesis that is an intermediate substrate in the synthesis of ABO blood group antigens. H antigen is essential for maturation of the glomerular layer of the main olfactory bulb, in cell migration and early cell-cell contacts during tumor associated angiogenesis. Preferentially fucosylates soluble lactose and to a lesser extent fucosylates glycolipids gangliosides GA1 and GM1a. The polypeptide is Galactoside alpha-(1,2)-fucosyltransferase 1 (Leontopithecus chrysomelas (Golden-headed lion tamarin)).